A 208-amino-acid polypeptide reads, in one-letter code: Large ribosomal subunit protein uL4 (208 aa).

A disordered region spans residues 54-78; the sequence is RAEVSHTTKKPWNQKGTGRARAGMS.

Belongs to the universal ribosomal protein uL4 family. Part of the 50S ribosomal subunit.

One of the primary rRNA binding proteins, this protein initially binds near the 5'-end of the 23S rRNA. It is important during the early stages of 50S assembly. It makes multiple contacts with different domains of the 23S rRNA in the assembled 50S subunit and ribosome. Functionally, forms part of the polypeptide exit tunnel. The polypeptide is Large ribosomal subunit protein uL4 (Methylobacillus flagellatus (strain ATCC 51484 / DSM 6875 / VKM B-1610 / KT)).